Consider the following 122-residue polypeptide: Large ribosomal subunit protein uL14 (122 aa).

The protein belongs to the universal ribosomal protein uL14 family. As to quaternary structure, part of the 50S ribosomal subunit. Forms a cluster with proteins L3 and L19. In the 70S ribosome, L14 and L19 interact and together make contacts with the 16S rRNA in bridges B5 and B8.

Functionally, binds to 23S rRNA. Forms part of two intersubunit bridges in the 70S ribosome. The protein is Large ribosomal subunit protein uL14 of Chlorobium limicola (strain DSM 245 / NBRC 103803 / 6330).